Here is a 464-residue protein sequence, read N- to C-terminus: Rhodopsin (464 aa).

Residues 1–33 (MGRDIPDNETWWYNPTMEVHPHWKQFNQVPDAV) are Extracellular-facing. Asn-8 is a glycosylation site (N-linked (GlcNAc...) asparagine). Residues 34-58 (YYSLGIFIGICGIIGCTGNGIVIYL) traverse the membrane as a helical segment. The Cytoplasmic segment spans residues 59–70 (FTKTKSLQTPAN). The chain crosses the membrane as a helical span at residues 71-97 (MFIINLAFSDFTFSLVNGFPLMTISCF). Over 98-109 (IKKWVFGMAACK) the chain is Extracellular. A disulfide bridge connects residues Cys-108 and Cys-186. The helical transmembrane segment at 110–131 (VYGFIGGIFGLMSIMTMSMISI) threads the bilayer. The 'Ionic lock' involved in activated form stabilization signature appears at 132–134 (DRY). Residues 132-151 (DRYNVIGRPMAASKKMSHRR) lie on the Cytoplasmic side of the membrane. The helical transmembrane segment at 152-172 (AFLMIIFVWMWSTLWSIGPIF) threads the bilayer. Topologically, residues 173 to 199 (GWGAYVLEGVLCNCSFDYITRDSATRS) are extracellular. A helical transmembrane segment spans residues 200 to 224 (NIVCMYIFAFCFPILIIFFCYFNIV). At 225–261 (MAVSNHEKEMAAMAKRLNAKELRKAQAGASAEMKLAK) the chain is on the cytoplasmic side. Residues 262-283 (ISIVIVTQFLLSWSPYAVVALL) form a helical membrane-spanning segment. Topologically, residues 284–293 (AQFGPIEWVT) are extracellular. Residues 294-315 (PYAAQLPVMFAKASAIHNPLIY) form a helical membrane-spanning segment. Lys-305 bears the N6-(retinylidene)lysine mark. Over 316–464 (SVSHPKFREA…QGVDNQAYQA (149 aa)) the chain is Cytoplasmic. 2 S-palmitoyl cysteine lipidation sites follow: Cys-336 and Cys-337. The tract at residues 344-464 (VEDDKDAETE…QGVDNQAYQA (121 aa)) is disordered. Positions 367–401 (AAQMKEMMAMMQKMQQQQAAYPPQGAYPPQGGYPP) are enriched in low complexity. Composition is skewed to pro residues over residues 416-425 (QGYPPPPQGY) and 434-452 (QGYP…PQAA).

The protein belongs to the G-protein coupled receptor 1 family. Opsin subfamily. Post-translationally, contains one covalently linked retinal chromophore. Upon light absorption, the covalently bound 11-cis-retinal is converted to all-trans-retinal. After hydrolysis of the Schiff base and release of the covalently bound all-trans-retinal, active rhodopsin is regenerated by binding of a fresh molecule of 11-cis-retinal.

It localises to the cell projection. It is found in the rhabdomere membrane. Photoreceptor required for image-forming vision at low light intensity. Light-induced isomerization of 11-cis to all-trans retinal triggers a conformational change that activates signaling via G-proteins. Signaling mediates the activation of phospholipase C. Subsequent receptor phosphorylation mediates displacement of the bound G-protein alpha subunit by arrestin and terminates signaling. The polypeptide is Rhodopsin (RHO) (Sepia officinalis (Common cuttlefish)).